Consider the following 573-residue polypeptide: MTLSDFEKQRQENIQRNKELLRQLELDSLNDSISREVPKPKPKAKRRKTENARVKTEPIMPSRRSRRLAGSTMEDSEEDKQMREEMEKAEERKRELEKLKSTRLFGDFKLIDLVVNKQGEFKNQDKILKAKEKDNEIKKEEKEEIKKEEDSTDSIDLSRDNEVLQKLQQLGDRFSAGDFYEMIKDTKSKYDDTVLQEKREEFDRVKLYERFDPLDIKITQQRITSIAFHPAKDDRVVVAGDTTGYVGIWAVDAKGDDETSPHITILKPHGKAVARILTPEQQPSSILTCSYDGSVRRLDLKRLESTEVAYLQDPYESSDYPLGVSDINVADNNLLYMTTLSGNFYRYDMRSPFKQGELLRLHDKKIGSFSINPNAFHQIATASLDRTMKLWDLRNISQKNSYWSEFDDKSPHLYCTYHSRLSVSCVDWNHDNHLVCNGYDDTVNVFDLSGSDKLPLVTEWSKDYETEKKKRTTIEDGVPEKLEALTRIKHNCQTGRWVSILKSKWQLHPADGLQKFVIANMNRAFDIYDQKGRILCHLTDPDRMTAVPAVSMLHPTENWCVGGSASGKVYLFE.

Residues 27 to 94 (DSLNDSISRE…EMEKAEERKR (68 aa)) form a disordered region. Positions 72–152 (TMEDSEEDKQ…EEIKKEEDST (81 aa)) form a coiled coil. Basic and acidic residues predominate over residues 79–94 (DKQMREEMEKAEERKR). WD repeat units lie at residues 218 to 259 (ITQQ…DDET), 268 to 308 (PHGK…STEV), 319 to 357 (DYPL…KQGE), 361 to 401 (LHDK…QKNS), 418 to 456 (HSRL…KLPL), 495 to 538 (GRWV…LCHL), and 542 to 573 (DRMT…YLFE).

The protein belongs to the WD repeat DDB2/WDR76 family.

Functionally, DNA-binding protein that binds to both single- and double-stranded DNA. Binds preferentially to UV-damaged DNA. May be involved in DNA-metabolic processes. The sequence is that of DNA damage-binding protein CMR1 from Meyerozyma guilliermondii (strain ATCC 6260 / CBS 566 / DSM 6381 / JCM 1539 / NBRC 10279 / NRRL Y-324) (Yeast).